A 31-amino-acid chain; its full sequence is Cytochrome b6-f complex subunit 6 (31 aa).

The chain crosses the membrane as a helical span at residues I3–I23.

It belongs to the PetL family. In terms of assembly, the 4 large subunits of the cytochrome b6-f complex are cytochrome b6, subunit IV (17 kDa polypeptide, PetD), cytochrome f and the Rieske protein, while the 4 small subunits are PetG, PetL, PetM and PetN. The complex functions as a dimer.

The protein localises to the plastid. It is found in the chloroplast thylakoid membrane. Component of the cytochrome b6-f complex, which mediates electron transfer between photosystem II (PSII) and photosystem I (PSI), cyclic electron flow around PSI, and state transitions. PetL is important for photoautotrophic growth as well as for electron transfer efficiency and stability of the cytochrome b6-f complex. In Welwitschia mirabilis (Tree tumbo), this protein is Cytochrome b6-f complex subunit 6.